The sequence spans 20 residues: Pregnancy-associated glycoprotein 55h (20 aa).

Asn-4 is a glycosylation site (N-linked (GlcNAc...) asparagine).

It belongs to the peptidase A1 family. In terms of tissue distribution, highly expressed in the placenta between day 60 and day 100 of gestation.

The protein localises to the secreted. It is found in the extracellular space. This chain is Pregnancy-associated glycoprotein 55h, found in Ovis aries (Sheep).